Consider the following 375-residue polypeptide: Succinyl-diaminopimelate desuccinylase (375 aa).

Position 66 (His-66) interacts with Zn(2+). Residue Asp-68 is part of the active site. Asp-99 lines the Zn(2+) pocket. Glu-133 acts as the Proton acceptor in catalysis. Zn(2+)-binding residues include Glu-134, Glu-162, and His-348.

This sequence belongs to the peptidase M20A family. DapE subfamily. As to quaternary structure, homodimer. The cofactor is Zn(2+). It depends on Co(2+) as a cofactor.

The enzyme catalyses N-succinyl-(2S,6S)-2,6-diaminopimelate + H2O = (2S,6S)-2,6-diaminopimelate + succinate. Its pathway is amino-acid biosynthesis; L-lysine biosynthesis via DAP pathway; LL-2,6-diaminopimelate from (S)-tetrahydrodipicolinate (succinylase route): step 3/3. Functionally, catalyzes the hydrolysis of N-succinyl-L,L-diaminopimelic acid (SDAP), forming succinate and LL-2,6-diaminopimelate (DAP), an intermediate involved in the bacterial biosynthesis of lysine and meso-diaminopimelic acid, an essential component of bacterial cell walls. This Escherichia coli (strain SE11) protein is Succinyl-diaminopimelate desuccinylase.